The chain runs to 477 residues: Aspartyl/glutamyl-tRNA(Asn/Gln) amidotransferase subunit B (477 aa).

The protein belongs to the GatB/GatE family. GatB subfamily. In terms of assembly, heterotrimer of A, B and C subunits.

It catalyses the reaction L-glutamyl-tRNA(Gln) + L-glutamine + ATP + H2O = L-glutaminyl-tRNA(Gln) + L-glutamate + ADP + phosphate + H(+). The catalysed reaction is L-aspartyl-tRNA(Asn) + L-glutamine + ATP + H2O = L-asparaginyl-tRNA(Asn) + L-glutamate + ADP + phosphate + 2 H(+). In terms of biological role, allows the formation of correctly charged Asn-tRNA(Asn) or Gln-tRNA(Gln) through the transamidation of misacylated Asp-tRNA(Asn) or Glu-tRNA(Gln) in organisms which lack either or both of asparaginyl-tRNA or glutaminyl-tRNA synthetases. The reaction takes place in the presence of glutamine and ATP through an activated phospho-Asp-tRNA(Asn) or phospho-Glu-tRNA(Gln). The chain is Aspartyl/glutamyl-tRNA(Asn/Gln) amidotransferase subunit B from Coxiella burnetii (strain CbuK_Q154) (Coxiella burnetii (strain Q154)).